A 148-amino-acid chain; its full sequence is Single-stranded DNA-binding protein 2 (148 aa).

Residues 4–109 form the SSB domain; sequence INSVIIAGNL…IKARRIQFLN (106 aa).

In terms of assembly, homotetramer.

In Chlorobaculum tepidum (strain ATCC 49652 / DSM 12025 / NBRC 103806 / TLS) (Chlorobium tepidum), this protein is Single-stranded DNA-binding protein 2 (ssb2).